We begin with the raw amino-acid sequence, 84 residues long: Putative regulatory protein Dde_2720 (84 aa).

It belongs to the RemA family.

The protein is Putative regulatory protein Dde_2720 of Oleidesulfovibrio alaskensis (strain ATCC BAA-1058 / DSM 17464 / G20) (Desulfovibrio alaskensis).